The chain runs to 160 residues: Putative pre-16S rRNA nuclease (160 aa).

This sequence belongs to the YqgF nuclease family.

Its subcellular location is the cytoplasm. Could be a nuclease involved in processing of the 5'-end of pre-16S rRNA. The sequence is that of Putative pre-16S rRNA nuclease from Cutibacterium acnes (strain DSM 16379 / KPA171202) (Propionibacterium acnes).